A 560-amino-acid polypeptide reads, in one-letter code: MKKKFLVKKIITSALPYVNNQPHLGNIIGCVLSADMYARFCRKNNEDVVFLSGTDEYGTAIEMAAFAQNKTPLQICEENRIIHKKIYDWFNIDFDFFGHTTSTAHTKNVQDFFNKIHNNGFFTEQEIEQFFCDKCQIFLADRYVVGTCKFCKYTDAKGDQCDGCGHTYKSLDLIDAKCTLCHSFPNIKSTRHLFFDFNNFKDKLQKLFNTNSQYWSENGKQITKSWLDQELLPRCMTRDLKNRWGVPVPLKDFEEKVFYVWFDAVIGYFTFYKEYVAARSESKELDKNNVFATDNILQDCELVQFMGKDNVFFHTIVFPSLIFATNDSYPLIKKLSVTEFLLFENEKFSKSRGHGIFGLDLVDNTMGQSCLWRYYLAKIRPEKCDSNFSFTHFTNVIDADLNNNIGNFCNRVLKYIKNKNDKLISIDKLEHRDDLMVQTIDKIYKEYLTSFSAIRIREALEKILEISKVGNEYVQQVVSSKIEVPKGFQVAFSIVVLIGQLLEPFIPVSSEKLLKMCNRKKENFCESFYIIKSAEIGDDIKPLFNKLDDSLIERIKNFKK.

Positions 16-26 match the 'HIGH' region motif; that stretch reads PYVNNQPHLGN. Positions 347 to 351 match the 'KMSKS' region motif; it reads KFSKS. An ATP-binding site is contributed by Lys350.

The protein belongs to the class-I aminoacyl-tRNA synthetase family.

The protein resides in the cytoplasm. The enzyme catalyses tRNA(Met) + L-methionine + ATP = L-methionyl-tRNA(Met) + AMP + diphosphate. This chain is Probable methionine--tRNA ligase, cytoplasmic, found in Vairimorpha ceranae (strain BRL01) (Microsporidian parasite).